We begin with the raw amino-acid sequence, 549 residues long: Oxygen-dependent choline dehydrogenase (549 aa).

4 to 33 (DFVIIGSGSAGSAMAYRLSEDGRYSVIVIE) serves as a coordination point for FAD. His465 (proton acceptor) is an active-site residue.

Belongs to the GMC oxidoreductase family. FAD serves as cofactor.

It catalyses the reaction choline + A = betaine aldehyde + AH2. It carries out the reaction betaine aldehyde + NAD(+) + H2O = glycine betaine + NADH + 2 H(+). Its pathway is amine and polyamine biosynthesis; betaine biosynthesis via choline pathway; betaine aldehyde from choline (cytochrome c reductase route): step 1/1. Functionally, involved in the biosynthesis of the osmoprotectant glycine betaine. Catalyzes the oxidation of choline to betaine aldehyde and betaine aldehyde to glycine betaine at the same rate. This Brucella melitensis biotype 1 (strain ATCC 23456 / CCUG 17765 / NCTC 10094 / 16M) protein is Oxygen-dependent choline dehydrogenase.